Reading from the N-terminus, the 451-residue chain is Lipase member H (451 aa).

The first 16 residues, 1–16 (MLRLCFFISFMCLVKS), serve as a signal peptide directing secretion. N-linked (GlcNAc...) asparagine glycosylation is present at Asn66. Residue Ser154 is the Nucleophile of the active site. The active-site Charge relay system is the Asp178. Cys233 and Cys246 are joined by a disulfide. The active-site Charge relay system is His248. Intrachain disulfides connect Cys270/Cys281, Cys284/Cys292, and Cys427/Cys446.

The protein belongs to the AB hydrolase superfamily. Lipase family. In terms of assembly, interacts with TTMP/C3orf52. Expressed in placenta and colon. Weakly expressed in small intestine.

The protein localises to the secreted. Its subcellular location is the cell membrane. It catalyses the reaction 1-hexadecanoyl-2-(9Z-octadecenoyl)-sn-glycero-3-phosphate + H2O = 2-(9Z-octadecenoyl)-sn-glycero-3-phosphate + hexadecanoate + H(+). In terms of biological role, hydrolyzes specifically phosphatidic acid (PA) to produce 2-acyl lysophosphatidic acid (LPA; a potent bioactive lipid mediator) and fatty acid. Does not hydrolyze other phospholipids, like phosphatidylserine (PS), phosphatidylcholine (PC) and phosphatidylethanolamine (PE) or triacylglycerol (TG). The sequence is that of Lipase member H (Liph) from Mus musculus (Mouse).